The primary structure comprises 100 residues: UPF0213 protein YhbQ (100 aa).

Residues 2-77 (TPWFLYLIRT…KQLTKRQKER (76 aa)) form the GIY-YIG domain.

It belongs to the UPF0213 family.

The polypeptide is UPF0213 protein YhbQ (Escherichia coli O139:H28 (strain E24377A / ETEC)).